An 870-amino-acid polypeptide reads, in one-letter code: Alanine--tRNA ligase (870 aa).

Residues histidine 585, histidine 589, cysteine 689, and histidine 693 each contribute to the Zn(2+) site.

The protein belongs to the class-II aminoacyl-tRNA synthetase family. It depends on Zn(2+) as a cofactor.

The protein resides in the cytoplasm. It carries out the reaction tRNA(Ala) + L-alanine + ATP = L-alanyl-tRNA(Ala) + AMP + diphosphate. In terms of biological role, catalyzes the attachment of alanine to tRNA(Ala) in a two-step reaction: alanine is first activated by ATP to form Ala-AMP and then transferred to the acceptor end of tRNA(Ala). Also edits incorrectly charged Ser-tRNA(Ala) and Gly-tRNA(Ala) via its editing domain. In Picrophilus torridus (strain ATCC 700027 / DSM 9790 / JCM 10055 / NBRC 100828 / KAW 2/3), this protein is Alanine--tRNA ligase.